Here is a 312-residue protein sequence, read N- to C-terminus: MEKHQYRDLQLIGQGSFGSVFRAQDVESSKIVALKVVDLDATKDQIETLTQEINFLIDLNSVHITKYYASFVDGFRLWITMEYCDGGSCLDLLKLSGTFSERVIAEVMRQVLEALVYLHGQGKMHRDIKAANILTMKDGLVKLADFGVSGQLESLRDKNDDFVGTPFWMAPEVVKQTGYNYKADIWSLGITAYELATGEPPYSGIHPMKVLLLIPKHSPPSLERSKFSRAFCDFVSNCLKKNPKDRATAEYLSKHKFIKKYCPNTSVKEVVASYAKWKESELLPEATPYNSTMGNSANTIDEVVWDFGTVRR.

The region spanning 6–258 (YRDLQLIGQG…AEYLSKHKFI (253 aa)) is the Protein kinase domain. Residues 12–20 (IGQGSFGSV) and lysine 35 each bind ATP. The active-site Proton acceptor is the aspartate 127.

It belongs to the protein kinase superfamily. Ser/Thr protein kinase family.

The protein localises to the cytoplasm. Its subcellular location is the nucleus. It carries out the reaction L-seryl-[protein] + ATP = O-phospho-L-seryl-[protein] + ADP + H(+). The catalysed reaction is L-threonyl-[protein] + ATP = O-phospho-L-threonyl-[protein] + ADP + H(+). This is Serine/threonine-protein kinase ppk11 (ppk11) from Schizosaccharomyces pombe (strain 972 / ATCC 24843) (Fission yeast).